Here is a 762-residue protein sequence, read N- to C-terminus: cGMP-dependent protein kinase 2 (762 aa).

The disordered stretch occupies residues 1–25; that stretch reads MGNGSVKPKHSKHPDGQSGNLSNEA. Residue glycine 2 is the site of N-myristoyl glycine attachment. Phosphoserine is present on residues serine 110 and serine 117. Residues 112 to 138 are disordered; the sequence is LVSLHSRRGAKAGVSAEPTSRTYDLNK. Residues 168-283 form a cGMP-binding, high affinity; cAMP-binding, moderate affinity region; that stretch reads FLKRLDPQQI…DEEYRNFLRS (116 aa). Residues 232–235, 242–243, lysine 347, 356–359, 366–367, aspartate 412, and arginine 415 contribute to the 3',5'-cyclic GMP site; these read GELA, RT, GEKA, and RS. A cGMP-binding, high affinity; cAMP-binding, low affinity region spans residues 286–416; sequence LLKNLPEDKL…TLNRDDEKRH (131 aa). Serine 431 is modified (phosphoserine). One can recognise a Protein kinase domain in the interval 453 to 711; it reads LEIIATLGVG…INDIKKHRWL (259 aa). Residues 459-467 and lysine 482 each bind ATP; that span reads LGVGGFGRV. Aspartate 576 acts as the Proton acceptor in catalysis. Threonine 609 bears the Phosphothreonine mark. The AGC-kinase C-terminal domain maps to 712 to 762; sequence NGFNWEGLKARSLPSPLRRELSGPIDHSYFDKYPPEKGVPPDEMSGWDKDF. The segment at 740–762 is disordered; sequence YFDKYPPEKGVPPDEMSGWDKDF.

The protein belongs to the protein kinase superfamily. AGC Ser/Thr protein kinase family. cGMP subfamily. In terms of assembly, interacts with GRIA1/GLUR1. Myristoylation mediates membrane localization. As to expression, highly expressed in intestinal mucosa and is 20 times less abundant in brain and kidney. Expressed in jejunum, in the apical domain of the villus epithelium.

The protein localises to the apical cell membrane. It localises to the cell membrane. The enzyme catalyses L-seryl-[protein] + ATP = O-phospho-L-seryl-[protein] + ADP + H(+). The catalysed reaction is L-threonyl-[protein] + ATP = O-phospho-L-threonyl-[protein] + ADP + H(+). Its activity is regulated as follows. Binding of cGMP results in enzyme activation. Functionally, crucial regulator of intestinal secretion and bone growth. Phosphorylates and activates CFTR on the plasma membrane. Plays a key role in intestinal secretion by regulating cGMP-dependent translocation of CFTR in jejunum. Acts downstream of NMDAR to activate the plasma membrane accumulation of GRIA1/GLUR1 in synapse and increase synaptic plasticity. Phosphorylates GRIA1/GLUR1 at Ser-863. Acts as regulator of gene expression and activator of the extracellular signal-regulated kinases MAPK3/ERK1 and MAPK1/ERK2 in mechanically stimulated osteoblasts. Under fluid shear stress, mediates ERK activation and subsequent induction of FOS, FOSL1/FRA1, FOSL2/FRA2 and FOSB that play a key role in the osteoblast anabolic response to mechanical stimulation. This is cGMP-dependent protein kinase 2 (Prkg2) from Rattus norvegicus (Rat).